A 514-amino-acid chain; its full sequence is Histidine ammonia-lyase (514 aa).

Residues 143–145 constitute a cross-link (5-imidazolinone (Ala-Gly)); sequence ASG. The residue at position 144 (serine 144) is a 2,3-didehydroalanine (Ser).

The protein belongs to the PAL/histidase family. In terms of processing, contains an active site 4-methylidene-imidazol-5-one (MIO), which is formed autocatalytically by cyclization and dehydration of residues Ala-Ser-Gly.

The protein localises to the cytoplasm. The enzyme catalyses L-histidine = trans-urocanate + NH4(+). It participates in amino-acid degradation; L-histidine degradation into L-glutamate; N-formimidoyl-L-glutamate from L-histidine: step 1/3. The polypeptide is Histidine ammonia-lyase (Photorhabdus laumondii subsp. laumondii (strain DSM 15139 / CIP 105565 / TT01) (Photorhabdus luminescens subsp. laumondii)).